Reading from the N-terminus, the 489-residue chain is GTPase Der (489 aa).

EngA-type G domains lie at Pro-3–Val-166 and Ile-201–Thr-374. GTP is bound by residues Gly-9–Ser-16, Asp-56–Ile-60, Asn-118–Asp-121, Gly-207–Ser-214, Asp-254–Val-258, and Asn-319–Asp-322. A KH-like domain is found at Lys-375–Thr-459.

Belongs to the TRAFAC class TrmE-Era-EngA-EngB-Septin-like GTPase superfamily. EngA (Der) GTPase family. Associates with the 50S ribosomal subunit.

Functionally, GTPase that plays an essential role in the late steps of ribosome biogenesis. This chain is GTPase Der, found in Psychromonas ingrahamii (strain DSM 17664 / CCUG 51855 / 37).